Consider the following 242-residue polypeptide: Type III pantothenate kinase (242 aa).

Residue 7–14 (DLGNSRFK) participates in ATP binding. Residues Tyr-91 and 98 to 101 (GVDR) each bind substrate. Asp-100 (proton acceptor) is an active-site residue. Residue Thr-121 participates in ATP binding. Position 171 (Thr-171) interacts with substrate.

This sequence belongs to the type III pantothenate kinase family. In terms of assembly, homodimer. Requires NH4(+) as cofactor. K(+) is required as a cofactor.

It is found in the cytoplasm. The enzyme catalyses (R)-pantothenate + ATP = (R)-4'-phosphopantothenate + ADP + H(+). It participates in cofactor biosynthesis; coenzyme A biosynthesis; CoA from (R)-pantothenate: step 1/5. Catalyzes the phosphorylation of pantothenate (Pan), the first step in CoA biosynthesis. The protein is Type III pantothenate kinase of Xanthomonas oryzae pv. oryzae (strain MAFF 311018).